A 365-amino-acid chain; its full sequence is Centrosomal protein of 41 kDa B (365 aa).

Basic and acidic residues predominate over residues 1-14; sequence MSAKRSIGDPEILK. 2 disordered regions span residues 1–23 and 104–123; these read MSAKRSIGDPEILKKRIPQNQKY and EFLTDRPNGKGSPVSESKSP. Residues 177–274 form the Rhodanese domain; sequence EDCPFLLLDV…ISQKFPQGLT (98 aa). Residues 329 to 365 form a disordered region; the sequence is TSTPSRLRLDSRNSKVPSSASSARSLSSTSSHSKPWK. Low complexity predominate over residues 342-365; it reads SKVPSSASSARSLSSTSSHSKPWK.

The protein belongs to the CEP41 family.

The protein resides in the cytoplasm. The protein localises to the cytoskeleton. It localises to the microtubule organizing center. Its subcellular location is the centrosome. It is found in the cell projection. The protein resides in the cilium. The protein localises to the cilium basal body. Required during ciliogenesis for tubulin glutamylation in cilium. Probably acts by participating in the transport of tubulin polyglutamylases between the basal body and the cilium. This Xenopus laevis (African clawed frog) protein is Centrosomal protein of 41 kDa B (cep41-b).